Reading from the N-terminus, the 528-residue chain is Low affinity inorganic phosphate transporter 4 (528 aa).

Residues 1–18 are Cytoplasmic-facing; that stretch reads MGLEVLEALDSARTQWYH. The chain crosses the membrane as a helical span at residues 19 to 39; the sequence is VTAIVIAGMGFFTDAYDLFCI. Over 40 to 68 the chain is Extracellular; the sequence is STVSKLLGRLYYFDPSTNKPGKLPPSVNN. Residues 69–89 form a helical membrane-spanning segment; it reads VVTGVALVGTLSGQLVFGWLG. Residues 90–96 are Cytoplasmic-facing; that stretch reads DKLGRKK. Residues 97–117 form a helical membrane-spanning segment; that stretch reads VYGVTLIIMVACAICSGLSFG. Residues 118–122 are Extracellular-facing; that stretch reads SSAKS. Residues 123–143 traverse the membrane as a helical segment; it reads VMITLCFFRFWLGFGIGGDYP. Residues 144–158 lie on the Cytoplasmic side of the membrane; sequence LSATIMSEYANKRTR. A helical transmembrane segment spans residues 159–179; it reads GAFIAAVFAMQGVGIIFAGLV. At 180-208 the chain is on the extracellular side; it reads SMVFSGIFKAYYQAPRFNEDPILSTQPEG. A helical membrane pass occupies residues 209–229; that stretch reads DLLWRLILMIGAVPAAMTYYW. At 230–292 the chain is on the cytoplasmic side; that stretch reads RMKMPETGRY…SEFFNRHGRH (63 aa). Residues 293–313 traverse the membrane as a helical segment; the sequence is LIGTMSCWFLLDIAFYSQNLT. Residues 314–341 lie on the Extracellular side of the membrane; sequence QKDIYPAMGLIRQDKEMNAIDEVFQTSR. Residues 342–362 form a helical membrane-spanning segment; the sequence is AMFVVALFGTFPGYWFTVFFI. Residues 363–371 are Cytoplasmic-facing; that stretch reads EKLGRFKIQ. Residues 372–392 form a helical membrane-spanning segment; that stretch reads LVGFFMMSFFMFVIGVKYEYL. Residues 393–401 lie on the Extracellular side of the membrane; the sequence is KDENKNLFA. Residues 402–422 traverse the membrane as a helical segment; the sequence is LLYGLTFFFANFGPNSTTFVL. Topologically, residues 423–433 are cytoplasmic; the sequence is PAELFPTRVRS. The helical transmembrane segment at 434–454 threads the bilayer; the sequence is TCHAFSAASGKAGAMVGAFGI. Over 455-468 the chain is Extracellular; that stretch reads QYYTLDGTPRKIRR. Residues 469 to 489 form a helical membrane-spanning segment; that stretch reads AMMILAFTNLIGFFCTFLVTE. At 490 to 528 the chain is on the cytoplasmic side; it reads TKGRSLEEISGEDGRESELTATPNDRAPGIRQDSRTEKM. Positions 497–507 are enriched in basic and acidic residues; that stretch reads EISGEDGRESE. The interval 497–528 is disordered; that stretch reads EISGEDGRESELTATPNDRAPGIRQDSRTEKM.

The protein belongs to the major facilitator superfamily. Phosphate:H(+) symporter (TC 2.A.1.9) family. As to expression, mostly expressed in mycorrhizal roots. Also observed in root tips of non-mycorrhizal roots, in a phosphate (Pi) depended-manner, highest expression levels being observed in low Pi conditions.

It localises to the cell membrane. It carries out the reaction phosphate(in) + H(+)(in) = phosphate(out) + H(+)(out). Its function is as follows. Low-affinity transporter for external inorganic phosphate (Pi) probably involved in the acquisition of phosphate released by arbuscular mycorrhizal (AM) fungi (e.g. Gigaspora gigantea, Glomus versiforme and G.intraradices) during AM symbiosis; required for propper mycorrhizal arbuscule morphology. Acts as a Pi-sensing machinery at the root tip level, independently of AM fungi, involved in the regulation of early root branching and lateral roots formation. This Medicago truncatula (Barrel medic) protein is Low affinity inorganic phosphate transporter 4.